A 231-amino-acid polypeptide reads, in one-letter code: Large ribosomal subunit protein uL1 (231 aa).

Belongs to the universal ribosomal protein uL1 family. As to quaternary structure, part of the 50S ribosomal subunit.

Binds directly to 23S rRNA. The L1 stalk is quite mobile in the ribosome, and is involved in E site tRNA release. Functionally, protein L1 is also a translational repressor protein, it controls the translation of the L11 operon by binding to its mRNA. The polypeptide is Large ribosomal subunit protein uL1 (Methylocella silvestris (strain DSM 15510 / CIP 108128 / LMG 27833 / NCIMB 13906 / BL2)).